The sequence spans 306 residues: Type 3 secretion system translocon protein SctB (306 aa).

A helical transmembrane segment spans residues 128–152 (LMIAMAVVSGIMAATSTVASAFSIA).

The protein belongs to the SctB/YopD family. In terms of assembly, the core secretion machinery of the T3SS is composed of approximately 20 different proteins, including cytoplasmic components, a base, an export apparatus and a needle. This subunit is involved in the formation of a pore, called the translocon, in host membrane. Interacts with YopB/SctE and YopE. Together with YopB/SctE, forms a multimeric integral membrane complex with a mass of between 500 and 700 kDa. Interacts with its cognate chaperone SycD.

The protein localises to the secreted. It localises to the host membrane. Functionally, component of the type III secretion system (T3SS), also called injectisome, which is used to inject bacterial effector proteins into eukaryotic host cells. YopB/SctE and YopD/SctB are inserted into the host membrane where they form a pore and allow the translocation of effector proteins into the cytosol of target cells. In terms of biological role, involved in pathogenesis. Essential for the establishment of Yersinia infections in a mouse model system, but not for the targeting of effector Yops. May modulate the host's immune response at a distance from the site of infection. The protein is Type 3 secretion system translocon protein SctB of Yersinia enterocolitica.